The sequence spans 59 residues: Large ribosomal subunit protein bL32 (59 aa).

Residues 1-16 (MAVPKRKVSPHRRGNR) show a composition bias toward basic residues. Positions 1 to 20 (MAVPKRKVSPHRRGNRRAHD) are disordered.

This sequence belongs to the bacterial ribosomal protein bL32 family.

This Erythrobacter litoralis (strain HTCC2594) protein is Large ribosomal subunit protein bL32.